Here is a 99-residue protein sequence, read N- to C-terminus: Small ribosomal subunit protein bS16 (99 aa).

A disordered region spans residues 80 to 99 (PPRQQNEAKRETAETAQPEA).

The protein belongs to the bacterial ribosomal protein bS16 family.

The chain is Small ribosomal subunit protein bS16 from Thermomicrobium roseum (strain ATCC 27502 / DSM 5159 / P-2).